Reading from the N-terminus, the 101-residue chain is MNSIVNFSQQLIQNFQEVSQRTAADSSNLKAFAYLGAGLAMIGVIGVGAGQGYAAGKACDAIARNPEAQKQVFRVLVIGTAISETSSIYALLVALILIFVG.

Helical transmembrane passes span 31–51 (AFAYLGAGLAMIGVIGVGAGQ) and 81–101 (AISETSSIYALLVALILIFVG).

The protein belongs to the ATPase C chain family. F-type ATPases have 2 components, F(1) - the catalytic core - and F(0) - the membrane proton channel. F(1) has five subunits: alpha(3), beta(3), gamma(1), delta(1), epsilon(1). F(0) has three main subunits: a(1), b(2) and c(10-14). The alpha and beta chains form an alternating ring which encloses part of the gamma chain. F(1) is attached to F(0) by a central stalk formed by the gamma and epsilon chains, while a peripheral stalk is formed by the delta and b chains.

The protein localises to the cell membrane. F(1)F(0) ATP synthase produces ATP from ADP in the presence of a proton or sodium gradient. F-type ATPases consist of two structural domains, F(1) containing the extramembraneous catalytic core and F(0) containing the membrane proton channel, linked together by a central stalk and a peripheral stalk. During catalysis, ATP synthesis in the catalytic domain of F(1) is coupled via a rotary mechanism of the central stalk subunits to proton translocation. Functionally, key component of the F(0) channel; it plays a direct role in translocation across the membrane. A homomeric c-ring of between 10-14 subunits forms the central stalk rotor element with the F(1) delta and epsilon subunits. This Mesomycoplasma hyopneumoniae (strain J / ATCC 25934 / NCTC 10110) (Mycoplasma hyopneumoniae) protein is ATP synthase subunit c.